The primary structure comprises 253 residues: UPF0246 protein LBA1843 (253 aa).

Belongs to the UPF0246 family.

The polypeptide is UPF0246 protein LBA1843 (Lactobacillus acidophilus (strain ATCC 700396 / NCK56 / N2 / NCFM)).